Consider the following 123-residue polypeptide: UPF0382 membrane protein YwdK (123 aa).

4 consecutive transmembrane segments (helical) span residues 3 to 23 (VFII…AFGA), 49 to 69 (ALGL…GSVT), 71 to 91 (AGWL…ILSV), and 96 to 116 (ILGA…IMIV).

This sequence belongs to the UPF0382 family.

It localises to the cell membrane. This chain is UPF0382 membrane protein YwdK (ywdK), found in Bacillus subtilis (strain 168).